The primary structure comprises 402 residues: Dynactin subunit 2 (402 aa).

Residues 1-24 are disordered; the sequence is MADPKYADLPGIARNEPDVYETSD. Ala2 carries the post-translational modification N-acetylalanine. Tyr6 is modified (phosphotyrosine). Residue Ser83 is modified to Phosphoserine. A Phosphotyrosine modification is found at Tyr86. The stretch at 100-130 forms a coiled coil; sequence QQKYQRLLHEVQELTTEVEKIKTTVKESATE. A phosphothreonine mark is found at Thr134 and Thr199. The disordered stretch occupies residues 185–205; sequence KSSKGSSGGKSTGGTPPDSSL. Positions 215-247 form a coiled coil; it reads EQDKFSQAAKVAELEKRLTELEATVRCDQDAQN. At Ser321 the chain carries Phosphoserine.

The protein belongs to the dynactin subunit 2 family. In terms of assembly, subunit of dynactin, a multiprotein complex part of a tripartite complex with dynein and a adapter, such as BICDL1, BICD2 or HOOK3. The dynactin complex is built around ACTR1A/ACTB filament and consists of an actin-related filament composed of a shoulder domain, a pointed end and a barbed end. Its length is defined by its flexible shoulder domain. The soulder is composed of 2 DCTN1 subunits, 4 DCTN2 and 2 DCTN3. The 4 DCNT2 (via N-terminus) bind the ACTR1A filament and act as molecular rulers to determine the length. The pointed end is important for binding dynein-dynactin cargo adapters and consists of 4 subunits: ACTR10, DCNT4, DCTN5 and DCTN6. The barbed end is composed of a CAPZA1:CAPZB heterodimers, which binds ACTR1A/ACTB filament and dynactin and stabilizes dynactin. Interacts with BICD2 and CEP135. Interacts with DYNAP. Interacts with ECPAS. Interacts with MAPRE1.

The protein localises to the cytoplasm. The protein resides in the cytoskeleton. It localises to the microtubule organizing center. Its subcellular location is the centrosome. It is found in the membrane. In terms of biological role, part of the dynactin complex that activates the molecular motor dynein for ultra-processive transport along microtubules. In the dynactin soulder domain, binds the ACTR1A filament and acts as a molecular ruler to determine the length. Modulates cytoplasmic dynein binding to an organelle, and plays a role in prometaphase chromosome alignment and spindle organization during mitosis. Involved in anchoring microtubules to centrosomes. May play a role in synapse formation during brain development. In Rattus norvegicus (Rat), this protein is Dynactin subunit 2 (Dctn2).